Reading from the N-terminus, the 213-residue chain is Putative manganese efflux pump MntP (213 aa).

A run of 6 helical transmembrane segments spans residues 3 to 23 (ILSIVLTGFGLAMDAFAVSVA), 36 to 56 (ALKVALFFGGFQALMPLIGWG), 67 to 87 (AFDHWIAFILLSFIGGKMIFE), 130 to 150 (LAIATSIDALAVGVSFAFLGI), 152 to 172 (IVQTIIIIGIITFVLCFLGVI), and 187 to 207 (IVGGVILILIGINILLEHTGI).

The protein belongs to the MntP (TC 9.B.29) family.

It is found in the cell membrane. Functionally, probably functions as a manganese efflux pump. This is Putative manganese efflux pump MntP from Clostridium perfringens (strain 13 / Type A).